The chain runs to 267 residues: Hydroxyethylthiazole kinase (267 aa).

A substrate-binding site is contributed by Met-46. Residues Arg-122 and Ser-168 each coordinate ATP. Gly-195 contributes to the substrate binding site.

It belongs to the Thz kinase family. The cofactor is Mg(2+).

It catalyses the reaction 5-(2-hydroxyethyl)-4-methylthiazole + ATP = 4-methyl-5-(2-phosphooxyethyl)-thiazole + ADP + H(+). Its pathway is cofactor biosynthesis; thiamine diphosphate biosynthesis; 4-methyl-5-(2-phosphoethyl)-thiazole from 5-(2-hydroxyethyl)-4-methylthiazole: step 1/1. Catalyzes the phosphorylation of the hydroxyl group of 4-methyl-5-beta-hydroxyethylthiazole (THZ). The protein is Hydroxyethylthiazole kinase of Nitratidesulfovibrio vulgaris (strain DSM 19637 / Miyazaki F) (Desulfovibrio vulgaris).